The chain runs to 552 residues: Serine protease 53 (552 aa).

The N-terminal stretch at 1 to 23 (MRQSWRPELLIVGAVVVIEGLQA) is a signal peptide. Peptidase S1 domains lie at 24–273 (AQRA…AHVH) and 294–525 (VACG…NLDW). The disordered stretch occupies residues 27–46 (ACGQRGPGPPEPQEGNTLPG). The cysteines at positions 62 and 78 are disulfide-linked. Residues H77 and D128 each act as charge relay system in the active site. Disulfide bonds link C158–C230, C187–C209, C220–C249, and C326–C342. Residues S224, H341, and D382 each act as charge relay system in the active site. 2 cysteine pairs are disulfide-bonded: C443/C463 and C473/C501. Catalysis depends on S477, which acts as the Charge relay system.

It belongs to the peptidase S1 family.

The protein localises to the secreted. In vitro can degrade the fibrinogen alpha chain of as well as pro-urokinase-type plasminogen activator. This Mus musculus (Mouse) protein is Serine protease 53 (Prss53).